We begin with the raw amino-acid sequence, 1124 residues long: ATP-dependent DNA helicase mph1 (1124 aa).

Disordered stretches follow at residues 1–103 (MFTL…EARS) and 123–302 (QLTQ…PTQH). Composition is skewed to acidic residues over residues 7-17 (DSSDYFDDDLG) and 169-178 (RDDEYDDDEE). A compositionally biased stretch (polar residues) spans 210–222 (TPIIGQQSTTIEA). Acidic residues predominate over residues 226–236 (LLDDIPDDAFD). Positions 255–271 (SFTQSTNRPLGVRQTTL) are enriched in polar residues. Residues 328 to 496 (IAQKGLFHNL…AVIDGLDISR (169 aa)) form the Helicase ATP-binding domain. An ATP-binding site is contributed by 341-348 (LPTGLGKT). Residues 444–447 (DEAH) carry the DEAH box motif. In terms of domain architecture, Helicase C-terminal spans 666 to 840 (YLKQVVLNHF…GTRFTFHDDM (175 aa)). Residues 855-873 (KRAIDIPEENTVRDLPEPK) show a composition bias toward basic and acidic residues. 2 disordered regions span residues 855 to 923 (KRAI…TPEP) and 1016 to 1124 (MPKA…DSDD). 2 stretches are compositionally biased toward basic residues: residues 874-886 (RRGR…PKKF) and 906-916 (SKRRVPNKSKA).

It belongs to the DEAD box helicase family. DEAH subfamily. FANCM sub-subfamily. In terms of assembly, interacts with the MHF histone-fold complex to form the FANCM-MHF complex.

The protein localises to the nucleus. It catalyses the reaction ATP + H2O = ADP + phosphate + H(+). Its function is as follows. ATP-dependent DNA helicase involved in DNA damage repair by homologous recombination and in genome maintenance. Capable of unwinding D-loops. Plays a role in limiting crossover recombinants during mitotic DNA double-strand break (DSB) repair. Component of a FANCM-MHF complex which promotes gene conversion at blocked replication forks, probably by reversal of the stalled fork. This chain is ATP-dependent DNA helicase mph1, found in Aspergillus niger (strain ATCC MYA-4892 / CBS 513.88 / FGSC A1513).